The chain runs to 67 residues: Probable Sec-independent protein translocase protein TatE (67 aa).

A helical transmembrane segment spans residues 1-21; that stretch reads MEGISLAKLLIVGALIVLLFG. A disordered region spans residues 43–67; it reads MNDDSDATSKTASEDKNAGQAVHKE. The segment covering 54–67 has biased composition (basic and acidic residues); the sequence is ASEDKNAGQAVHKE.

Belongs to the TatA/E family. TatE subfamily.

It localises to the cell inner membrane. Its function is as follows. Part of the twin-arginine translocation (Tat) system that transports large folded proteins containing a characteristic twin-arginine motif in their signal peptide across membranes. TatE shares overlapping functions with TatA. This chain is Probable Sec-independent protein translocase protein TatE, found in Erwinia tasmaniensis (strain DSM 17950 / CFBP 7177 / CIP 109463 / NCPPB 4357 / Et1/99).